The chain runs to 89 residues: Small ribosomal subunit protein uS15 (89 aa).

This sequence belongs to the universal ribosomal protein uS15 family. As to quaternary structure, part of the 30S ribosomal subunit. Forms a bridge to the 50S subunit in the 70S ribosome, contacting the 23S rRNA.

One of the primary rRNA binding proteins, it binds directly to 16S rRNA where it helps nucleate assembly of the platform of the 30S subunit by binding and bridging several RNA helices of the 16S rRNA. Functionally, forms an intersubunit bridge (bridge B4) with the 23S rRNA of the 50S subunit in the ribosome. The chain is Small ribosomal subunit protein uS15 from Actinobacillus pleuropneumoniae serotype 5b (strain L20).